The chain runs to 99 residues: Malonate decarboxylase acyl carrier protein (99 aa).

Position 25 is an O-(phosphoribosyl dephospho-coenzyme A)serine (S25).

The protein belongs to the MdcC family. In terms of processing, covalently binds the prosthetic group of malonate decarboxylase.

The protein localises to the cytoplasm. In terms of biological role, subunit of malonate decarboxylase, it is an acyl carrier protein to which acetyl and malonyl thioester residues are bound via a 2'-(5''-phosphoribosyl)-3'-dephospho-CoA prosthetic group and turn over during the catalytic mechanism. The sequence is that of Malonate decarboxylase acyl carrier protein from Pseudomonas syringae pv. syringae (strain B728a).